The sequence spans 93 residues: UPF0457 protein GTNG_2792 (93 aa).

The protein belongs to the UPF0457 family.

This Geobacillus thermodenitrificans (strain NG80-2) protein is UPF0457 protein GTNG_2792.